The primary structure comprises 171 residues: MPRSQRNDNFIDKTFTIAADILLRVIPTTRREKEAFTYYRDGMSAQSEGEYAEALQNYYKAMRLEIDPYDRSYILYNIGLIHTSNGEHAKALEYYFQALERNPSLPQAFNNMAVICHYRGEQAIQQGDPGTSEIWFDKAAEYWKQAIALAPNNYIEAQNWLRITGRSEDWE.

TPR repeat units follow at residues 35 to 68 (AFTYYRDGMSAQSEGEYAEALQNYYKAMRLEIDP), 72 to 105 (SYILYNIGLIHTSNGEHAKALEYYFQALERNPSL), and 120 to 153 (GEQAIQQGDPGTSEIWFDKAAEYWKQAIALAPNN).

It belongs to the Ycf3 family.

It localises to the plastid. Its subcellular location is the chloroplast thylakoid membrane. Functionally, essential for the assembly of the photosystem I (PSI) complex. May act as a chaperone-like factor to guide the assembly of the PSI subunits. In Psilotum nudum (Whisk fern), this protein is Photosystem I assembly protein Ycf3.